We begin with the raw amino-acid sequence, 466 residues long: Glycylpeptide N-tetradecanoyltransferase (466 aa).

Positions 1 to 21 are disordered; it reads MDNENNKNTKNSQQDSSFSEG. Polar residues predominate over residues 8–19; sequence NTKNSQQDSSFS. Serine 17 is modified (phosphoserine). Residues 51–54, 185–187, and 193–197 each bind tetradecanoyl-CoA; these read FKFW, LCI, and SKRLT. Isoleucine 466 (proton acceptor; via carboxylate) is an active-site residue.

Belongs to the NMT family. In terms of assembly, monomer.

It is found in the cytoplasm. The catalysed reaction is N-terminal glycyl-[protein] + tetradecanoyl-CoA = N-tetradecanoylglycyl-[protein] + CoA + H(+). Adds a myristoyl group to the N-terminal glycine residue of certain cellular proteins. This is Glycylpeptide N-tetradecanoyltransferase (nmt1) from Schizosaccharomyces pombe (strain 972 / ATCC 24843) (Fission yeast).